The sequence spans 124 residues: Seripauperin-19 (124 aa).

The N-terminal stretch at 1–20 (MVKLTSIAAGVAAIAAGVAA) is a signal peptide.

This sequence belongs to the SRP1/TIP1 family. Seripauperin subfamily.

This Saccharomyces cerevisiae (strain ATCC 204508 / S288c) (Baker's yeast) protein is Seripauperin-19 (PAU19).